Here is a 303-residue protein sequence, read N- to C-terminus: Ribosomal RNA small subunit methyltransferase H (303 aa).

Residues glycine 33–histidine 35, aspartate 52, phenylalanine 78, aspartate 99, and glutamine 106 each bind S-adenosyl-L-methionine.

The protein belongs to the methyltransferase superfamily. RsmH family.

It localises to the cytoplasm. The catalysed reaction is cytidine(1402) in 16S rRNA + S-adenosyl-L-methionine = N(4)-methylcytidine(1402) in 16S rRNA + S-adenosyl-L-homocysteine + H(+). In terms of biological role, specifically methylates the N4 position of cytidine in position 1402 (C1402) of 16S rRNA. In Phytoplasma australiense, this protein is Ribosomal RNA small subunit methyltransferase H.